The primary structure comprises 330 residues: MVPQAKLVVASLILTSALIQTSEAVGGIATYWGQYTETEEGSLAEACASNLYSYINIAYLNIFGEGRYLSLNISGHCSDCTFLGEEIKACQSQGVKIFLSLGGPYGDYHLTTDGDADRVAEQLWSSFLGGSKSTGVYQPLLGDVELDGIDLDIQIGPPEEYDVLARNLKDLTKDRTRPFYLSAAPKCSAYNDSDAYLWTAVETGLFDFVWVKFYNDTSCQYNNDTAAGLDAFYRSWYDWTVSLAEGNKLLIGIPASNETDNSPLGGYIPSDVLNDQIVSVIMTSSKFGGVNVWNRYYDLKTNYSSSIILEYVNSGTKYLPLRTKFMYQNA.

The signal sequence occupies residues 1-24 (MVPQAKLVVASLILTSALIQTSEA). The region spanning 26 to 330 (GGIATYWGQY…LRTKFMYQNA (305 aa)) is the GH18 domain. 3 cysteine pairs are disulfide-bonded: cysteine 47/cysteine 90, cysteine 77/cysteine 80, and cysteine 187/cysteine 219. Positions 72–86 (NISGHCSDCTFLGEE) are binds to IgE in 70% of the 10 patients tested allergic to Indian jujube and latex. A binds to IgE in 100% of the 10 patients tested allergic to Indian jujube and latex; sufficient for prediction of the presence of allergic reactions in these patients region spans residues 292–301 (VWNRYYDLKT). Binds to IgE in 70% of the 10 patients tested allergic to Indian jujube and latex regions lie at residues 300 to 311 (KTNYSSSIILEY) and 309 to 320 (LEYVNSGTKYLP).

This sequence belongs to the glycosyl hydrolase 18 family. Chitinase class II subfamily.

The protein resides in the secreted. The catalysed reaction is Random endo-hydrolysis of N-acetyl-beta-D-glucosaminide (1-&gt;4)-beta-linkages in chitin and chitodextrins.. Functionally, defense against chitin containing fungal pathogens. The chain is Endochitinase Ziz m 1.0101 from Ziziphus mauritiana (Indian jujube).